We begin with the raw amino-acid sequence, 332 residues long: Glycerol-3-phosphate dehydrogenase [NAD(P)+] (332 aa).

NADPH is bound by residues Trp-13, Arg-33, and Lys-107. Residues Lys-107, Gly-136, and Ser-138 each contribute to the sn-glycerol 3-phosphate site. Ala-140 is an NADPH binding site. Sn-glycerol 3-phosphate is bound by residues Lys-191, Asp-244, Ser-254, Arg-255, and Asn-256. Catalysis depends on Lys-191, which acts as the Proton acceptor. Arg-255 provides a ligand contact to NADPH. NADPH is bound at residue Glu-280.

It belongs to the NAD-dependent glycerol-3-phosphate dehydrogenase family.

The protein localises to the cytoplasm. The enzyme catalyses sn-glycerol 3-phosphate + NAD(+) = dihydroxyacetone phosphate + NADH + H(+). It catalyses the reaction sn-glycerol 3-phosphate + NADP(+) = dihydroxyacetone phosphate + NADPH + H(+). The protein operates within membrane lipid metabolism; glycerophospholipid metabolism. In terms of biological role, catalyzes the reduction of the glycolytic intermediate dihydroxyacetone phosphate (DHAP) to sn-glycerol 3-phosphate (G3P), the key precursor for phospholipid synthesis. In Alkalilimnicola ehrlichii (strain ATCC BAA-1101 / DSM 17681 / MLHE-1), this protein is Glycerol-3-phosphate dehydrogenase [NAD(P)+].